Consider the following 141-residue polypeptide: Sperm protein associated with the nucleus on the X chromosome N3 (141 aa).

A compositionally biased stretch (polar residues) spans 1–10 (MEQPTSSTNG). 2 disordered regions span residues 1–47 (MEQP…TKTS) and 66–141 (NQLE…SGED). Over residues 11–26 (EKTKSPCESNNKKNDE) the composition is skewed to basic and acidic residues. Over residues 66-80 (NQLENEQSQENSINP) the composition is skewed to polar residues. Positions 84 to 103 (EEDEGVDLSEGSSNEDEDLG) are enriched in acidic residues. The segment covering 132–141 (EGSSQDSGED) has biased composition (polar residues).

It belongs to the SPAN-X family.

The sequence is that of Sperm protein associated with the nucleus on the X chromosome N3 (SPANXN3) from Homo sapiens (Human).